Reading from the N-terminus, the 60-residue chain is Large ribosomal subunit protein bL32 (60 aa).

This sequence belongs to the bacterial ribosomal protein bL32 family.

This Moorella thermoacetica (strain ATCC 39073 / JCM 9320) protein is Large ribosomal subunit protein bL32.